The chain runs to 353 residues: S-adenosylmethionine decarboxylase proenzyme (353 aa).

Residues Glu9 and Glu12 contribute to the active site. The Schiff-base intermediate with substrate; via pyruvic acid role is filled by Ser69. A Pyruvic acid (Ser); by autocatalysis modification is found at Ser69. The Proton donor; for catalytic activity role is filled by Cys83. Catalysis depends on proton acceptor; for processing activity residues Ser232 and His245.

This sequence belongs to the eukaryotic AdoMetDC family. The cofactor is pyruvate. In terms of processing, is synthesized initially as an inactive proenzyme. Formation of the active enzyme involves a self-maturation process in which the active site pyruvoyl group is generated from an internal serine residue via an autocatalytic post-translational modification. Two non-identical subunits are generated from the proenzyme in this reaction, and the pyruvate is formed at the N-terminus of the alpha chain, which is derived from the carboxyl end of the proenzyme. The post-translation cleavage follows an unusual pathway, termed non-hydrolytic serinolysis, in which the side chain hydroxyl group of the serine supplies its oxygen atom to form the C-terminus of the beta chain, while the remainder of the serine residue undergoes an oxidative deamination to produce ammonia and the pyruvoyl group blocking the N-terminus of the alpha chain.

It carries out the reaction S-adenosyl-L-methionine + H(+) = S-adenosyl 3-(methylsulfanyl)propylamine + CO2. It functions in the pathway amine and polyamine biosynthesis; S-adenosylmethioninamine biosynthesis; S-adenosylmethioninamine from S-adenosyl-L-methionine: step 1/1. The protein is S-adenosylmethionine decarboxylase proenzyme (SAMDC) of Vicia faba (Broad bean).